Reading from the N-terminus, the 275-residue chain is MPELPEVEVTRRGIEPFVAGRRVERVDVRTAMLRWPVPAGLAEQLRAREVLAVERRGKYLLFEVDAGWFIVHLGMTGTLRVLPAAGVPVAAKHDHIDWIFDEFVLRFRDPRRFGAVLWHPREAGDVHAHPLLASLGVEPFSPAFTGALLHARTRGRTVSVKQALLAGDMVVGVGNIYASESLFRAGIRPTTAAGKVSLPRYERLADAVRATLADAIERGGSTLRDFVGSNGESGYFQLDCFVYDRAGQPCRVCGTPVRQIVQGQRSTYFCPTCQR.

Residue proline 2 is the Schiff-base intermediate with DNA of the active site. The Proton donor role is filled by glutamate 3. Lysine 58 (proton donor; for beta-elimination activity) is an active-site residue. The DNA site is built by histidine 93, arginine 111, and arginine 156. The FPG-type zinc-finger motif lies at 241-275; the sequence is FVYDRAGQPCRVCGTPVRQIVQGQRSTYFCPTCQR. The active-site Proton donor; for delta-elimination activity is arginine 265.

The protein belongs to the FPG family. As to quaternary structure, monomer. Zn(2+) serves as cofactor.

The catalysed reaction is Hydrolysis of DNA containing ring-opened 7-methylguanine residues, releasing 2,6-diamino-4-hydroxy-5-(N-methyl)formamidopyrimidine.. It carries out the reaction 2'-deoxyribonucleotide-(2'-deoxyribose 5'-phosphate)-2'-deoxyribonucleotide-DNA = a 3'-end 2'-deoxyribonucleotide-(2,3-dehydro-2,3-deoxyribose 5'-phosphate)-DNA + a 5'-end 5'-phospho-2'-deoxyribonucleoside-DNA + H(+). In terms of biological role, involved in base excision repair of DNA damaged by oxidation or by mutagenic agents. Acts as a DNA glycosylase that recognizes and removes damaged bases. Has a preference for oxidized purines, such as 7,8-dihydro-8-oxoguanine (8-oxoG). Has AP (apurinic/apyrimidinic) lyase activity and introduces nicks in the DNA strand. Cleaves the DNA backbone by beta-delta elimination to generate a single-strand break at the site of the removed base with both 3'- and 5'-phosphates. The chain is Formamidopyrimidine-DNA glycosylase from Burkholderia cenocepacia (strain HI2424).